Reading from the N-terminus, the 489-residue chain is ATP-dependent zinc metalloprotease FtsH 3 (489 aa).

Topologically, residues Met1 to Gln14 are cytoplasmic. The chain crosses the membrane as a helical span at residues Ser15–Trp31. Topologically, residues Gln32–Asn489 are extracellular. Gly95 to Thr102 lines the ATP pocket. Residue His315 coordinates Zn(2+). The active site involves Glu316. Zn(2+)-binding residues include His319 and Asp391.

This sequence in the central section; belongs to the AAA ATPase family. It in the C-terminal section; belongs to the peptidase M41 family. As to quaternary structure, homohexamer. It depends on Zn(2+) as a cofactor.

The protein localises to the cell membrane. Acts as a processive, ATP-dependent zinc metallopeptidase for both cytoplasmic and membrane proteins. Plays a role in the quality control of integral membrane proteins. The polypeptide is ATP-dependent zinc metalloprotease FtsH 3 (Sphaerobacter thermophilus (strain ATCC 49802 / DSM 20745 / KCCM 41009 / NCIMB 13125 / S 6022)).